The chain runs to 373 residues: StAR-related lipid transfer protein 7, mitochondrial (373 aa).

Residues 1–61 (MFPRRPPATL…YSESSRCALL (61 aa)) constitute a mitochondrion transit peptide. A coiled-coil region spans residues 89-114 (DEERIQEEELQRSINEMKRLEEMSNI). The START domain occupies 115–330 (FQSSGVENYP…LHMATLKAKN (216 aa)). Disordered stretches follow at residues 118–141 (SGVE…KDKE) and 347–373 (SSEA…IEYA).

Proteolytically cleaved by PARL. Expressed in epithelial cells of airways, peripheral bronchioles and alveoli, as well as in the basal cell layer of the epidermis (at protein level).

The protein resides in the mitochondrion. In terms of biological role, may play a protective role in mucosal tissues by preventing exaggerated allergic responses. This chain is StAR-related lipid transfer protein 7, mitochondrial (Stard7), found in Mus musculus (Mouse).